A 122-amino-acid chain; its full sequence is Small ribosomal subunit protein uS13 (122 aa).

A disordered region spans residues 94–122; that stretch reads SLPVRGQRTKTNARTRKVHVSRSKNSRGK.

It belongs to the universal ribosomal protein uS13 family. In terms of assembly, part of the 30S ribosomal subunit. Forms a loose heterodimer with protein S19. Forms two bridges to the 50S subunit in the 70S ribosome.

Its function is as follows. Located at the top of the head of the 30S subunit, it contacts several helices of the 16S rRNA. In the 70S ribosome it contacts the 23S rRNA (bridge B1a) and protein L5 of the 50S subunit (bridge B1b), connecting the 2 subunits; these bridges are implicated in subunit movement. Contacts the tRNAs in the A and P-sites. The polypeptide is Small ribosomal subunit protein uS13 (Haemophilus influenzae (strain ATCC 51907 / DSM 11121 / KW20 / Rd)).